Reading from the N-terminus, the 392-residue chain is Keratin, type I cuticular Ha4 (392 aa).

Residues 1-56 are head; sequence MSCESCLPALSCRTSCSSRPCVPPSCHGCTLPGACNIPANVGNCNWFCEGSFNGNE. The IF rod domain maps to 56-367; it reads EKETMQFLND…SLLESEDCNL (312 aa). Residues 57–91 are coil 1A; it reads KETMQFLNDRLASYMEKVRQLERENAELECRIQER. Residues 92 to 102 are linker 1; the sequence is NQQQDPLVCPA. The interval 103–203 is coil 1B; that stretch reads YQAYFRTIEE…HEEEVNTLRC (101 aa). A linker 12 region spans residues 204 to 219; the sequence is QLGDRLNVEVDAAPTV. Residues 220–363 are coil 2; the sequence is DLNRVLNETR…NTYRSLLESE (144 aa). Residues 364–392 form a tail region; sequence DCNLPCNPCATTNASGSCCGPCGSSKRCC.

This sequence belongs to the intermediate filament family. In terms of tissue distribution, expressed in the hair root in the hair shaft cuticle and cortex.

This chain is Keratin, type I cuticular Ha4, found in Mus musculus (Mouse).